The chain runs to 415 residues: UV excision repair protein RAD23 homolog B (415 aa).

Positions 1–79 (MQVTLKTLQQ…VVVMVTKPKA (79 aa)) constitute a Ubiquitin-like domain. Positions 80-175 (VTSAVPATTQ…STPGDSSRSN (96 aa)) are disordered. Residues 84–143 (VPATTQQSSSPSTTTVSSSPAAAVAQAPAPTPALAPTSTPASTTPASTTASSEPAPTGAT) are compositionally biased toward low complexity. T155 is modified (phosphothreonine). Residues S160 and S174 each carry the phosphoserine modification. At T186 the chain carries Phosphothreonine. In terms of domain architecture, UBA 1 spans 188–228 (QSYENMVTEIMSMGYEREQVIAALRASFNNPDRAVEYLLMG). S199 carries the post-translational modification Phosphoserine. Y202 bears the Phosphotyrosine mark. The 44-residue stretch at 274 to 317 (HPLEFLRNQPQFQQMRQIIQQNPSLLPALLQQIGRENPQLLQQI) folds into the STI1 domain. Residues 334-355 (EAGGQGGGGGGGGGGGGGGGGI) are disordered. Over residues 336–355 (GGQGGGGGGGGGGGGGGGGI) the composition is skewed to gly residues. One can recognise a UBA 2 domain in the interval 370–410 (PQEKEAIERLKALGFPEGLVIQAYFACEKNENLAANFLLQQ).

This sequence belongs to the RAD23 family. As to quaternary structure, component of the XPC complex composed of XPC, RAD23B and CETN2. Interacts with NGLY1 and PSMC1. Interacts with ATXN3. Interacts with AMFR. Interacts with VCP; the interaction is indirect and mediated by NGLY1.

Its subcellular location is the nucleus. The protein localises to the cytoplasm. Functionally, multiubiquitin chain receptor involved in modulation of proteasomal degradation. Binds to polyubiquitin chains. Proposed to be capable to bind simultaneously to the 26S proteasome and to polyubiquitinated substrates and to deliver ubiquitinated proteins to the proteasome. May play a role in endoplasmic reticulum-associated degradation (ERAD) of misfolded glycoproteins by association with PNGase and delivering deglycosylated proteins to the proteasome. Involved in global genome nucleotide excision repair (GG-NER) by acting as component of the XPC complex. Cooperatively with Cetn2 appears to stabilize Xpc. May protect Xpc from proteasomal degradation. In terms of biological role, the XPC complex is proposed to represent the first factor bound at the sites of DNA damage and together with other core recognition factors, Xpa, RPA and the TFIIH complex, is part of the pre-incision (or initial recognition) complex. The XPC complex recognizes a wide spectrum of damaged DNA characterized by distortions of the DNA helix such as single-stranded loops, mismatched bubbles or single-stranded overhangs. The orientation of XPC complex binding appears to be crucial for inducing a productive NER. XPC complex is proposed to recognize and to interact with unpaired bases on the undamaged DNA strand which is followed by recruitment of the TFIIH complex and subsequent scanning for lesions in the opposite strand in a 5'-to-3' direction by the NER machinery. Cyclobutane pyrimidine dimers (CPDs) which are formed upon UV-induced DNA damage esacpe detection by the XPC complex due to a low degree of structural perurbation. Instead they are detected by the UV-DDB complex which in turn recruits and cooperates with the XPC complex in the respective DNA repair. In vitro, the XPC:RAD23B dimer is sufficient to initiate NER; it preferentially binds to cisplatin and UV-damaged double-stranded DNA and also binds to a variety of chemically and structurally diverse DNA adducts. XPC:RAD23B contacts DNA both 5' and 3' of a cisplatin lesion with a preference for the 5' side. Xpc:Rad22b induces a bend in DNA upon binding. Xpc:Rad23b stimulates the activity of DNA glycosylases Tdg and Smug1. This is UV excision repair protein RAD23 homolog B (Rad23b) from Rattus norvegicus (Rat).